The following is a 349-amino-acid chain: Protein disulfide isomerase Creld2 (349 aa).

The signal sequence occupies residues 1–22 (MHLLLAAGFGLLLLLLPPPAAS). The CXXC motif lies at 28 to 31 (CQRC). 4 disulfide bridges follow: cysteine 28–cysteine 31, cysteine 137–cysteine 151, cysteine 145–cysteine 163, and cysteine 165–cysteine 174. The region spanning 133–175 (DCKECQGGSERPCSGNGYCSGDGSRQGDGSCQCHAGYKGPLCI) is the EGF-like 1 domain. Residue asparagine 187 is glycosylated (N-linked (GlcNAc...) asparagine). An FU 1 repeat occupies 190 to 237 (HSICLACDESCKTCSGPSNKDCVQCEVGWARVEDACVDVDECAAETPP). Asparagine 248 carries N-linked (GlcNAc...) asparagine glycosylation. The stretch at 250-297 (SYICEECDSTCVGCTGKGPANCKECIAGYTKQSGQCADIDECSLEEKA) is one FU 2 repeat. The CXXC motif lies at 260–263 (CVGC). Cystine bridges form between cysteine 260–cysteine 263, cysteine 291–cysteine 305, cysteine 298–cysteine 314, and cysteine 316–cysteine 327. The 42-residue stretch at 287-328 (DIDECSLEEKACKRRNENCYNVPGSFVCVCPDGFEETEDACV) folds into the EGF-like 2; calcium-binding domain.

It belongs to the CRELD family. As to quaternary structure, interacts with Chrna4. Component of a complex containing at least Creld2, Manf, Matn3 and Pdia4. As to expression, broadly expressed in brain (at protein level).

The protein resides in the endoplasmic reticulum. It carries out the reaction Catalyzes the rearrangement of -S-S- bonds in proteins.. Protein disulfide isomerase. Might play a role in the unfolded protein response. May regulate transport of alpha4-beta2 neuronal acetylcholine receptor. In Rattus norvegicus (Rat), this protein is Protein disulfide isomerase Creld2 (Creld2).